A 402-amino-acid polypeptide reads, in one-letter code: Flavohemoprotein (402 aa).

The 138-residue stretch at 1–138 (MLSPEVRALV…LADLLIGRER (138 aa)) folds into the Globin domain. H85 is a binding site for heme b. Active-site charge relay system residues include Y95 and E137. The tract at residues 149-402 (GGWTGWRAFK…AEVFGTGGVA (254 aa)) is reductase. The FAD-binding FR-type domain occupies 152–261 (TGWRAFKVVR…SPPQGDFTLD (110 aa)). FAD is bound by residues Y190 and 206 to 209 (RQYS). Position 274–279 (274–279 (GVGLTP)) interacts with NADP(+). 395 to 398 (VFGT) is an FAD binding site.

Belongs to the globin family. Two-domain flavohemoproteins subfamily. The protein in the C-terminal section; belongs to the flavoprotein pyridine nucleotide cytochrome reductase family. Requires heme b as cofactor. FAD serves as cofactor.

The catalysed reaction is 2 nitric oxide + NADPH + 2 O2 = 2 nitrate + NADP(+) + H(+). The enzyme catalyses 2 nitric oxide + NADH + 2 O2 = 2 nitrate + NAD(+) + H(+). Its function is as follows. Is involved in NO detoxification in an aerobic process, termed nitric oxide dioxygenase (NOD) reaction that utilizes O(2) and NAD(P)H to convert NO to nitrate, which protects the bacterium from various noxious nitrogen compounds. Therefore, plays a central role in the inducible response to nitrosative stress. This Bordetella bronchiseptica (strain ATCC BAA-588 / NCTC 13252 / RB50) (Alcaligenes bronchisepticus) protein is Flavohemoprotein.